The chain runs to 355 residues: MEISDFTEAYPTTTEFDYGDSTPCQKTAVRAFGAGLLPPLYSLVFIIGVVGNVLVILVLMQHRRLQSMTSIYLFNLAVSDLVFLFTLPFWIDYKLKDDWIFGDAMCKLLSGFYYLGLYSEIFFIILLTIDRYLAIVHAVFALRARTVTFGIITSIITWALAILASMPALYFFKAQWEFTHRTCSPHFPYKSLKQWKRFQALKLNLLGLILPLLVMIICYAGIIRILLRRPSEKKVKAVRLIFAITLLFFLLWTPYNLSVFVSAFQDVLFTNQCEQSKQLDLAMQVTEVIAYTHCCVNPIIYVFVGERFWKYLRQLFQRHVAIPLAKWLPFLSVDQLERTSSISPSTGEHELSAGF.

Residues 1–34 (MEISDFTEAYPTTTEFDYGDSTPCQKTAVRAFGA) lie on the Extracellular side of the membrane. Residues 35-60 (GLLPPLYSLVFIIGVVGNVLVILVLM) traverse the membrane as a helical segment. The Cytoplasmic segment spans residues 61–64 (QHRR). The chain crosses the membrane as a helical span at residues 65–91 (LQSMTSIYLFNLAVSDLVFLFTLPFWI). Residues 92 to 107 (DYKLKDDWIFGDAMCK) are Extracellular-facing. Cysteines 106 and 183 form a disulfide. A helical membrane pass occupies residues 108 to 129 (LLSGFYYLGLYSEIFFIILLTI). The Cytoplasmic portion of the chain corresponds to 130 to 146 (DRYLAIVHAVFALRART). The chain crosses the membrane as a helical span at residues 147–171 (VTFGIITSIITWALAILASMPALYF). Over 172-197 (FKAQWEFTHRTCSPHFPYKSLKQWKR) the chain is Extracellular. A helical transmembrane segment spans residues 198–223 (FQALKLNLLGLILPLLVMIICYAGII). The Cytoplasmic segment spans residues 224–239 (RILLRRPSEKKVKAVR). Residues 240 to 264 (LIFAITLLFFLLWTPYNLSVFVSAF) traverse the membrane as a helical segment. The Extracellular segment spans residues 265-281 (QDVLFTNQCEQSKQLDL). Residues 282-305 (AMQVTEVIAYTHCCVNPIIYVFVG) traverse the membrane as a helical segment. The Cytoplasmic portion of the chain corresponds to 306-355 (ERFWKYLRQLFQRHVAIPLAKWLPFLSVDQLERTSSISPSTGEHELSAGF).

This sequence belongs to the G-protein coupled receptor 1 family. In terms of assembly, interacts with CREB3. Interacts with CCL3. Interacts with CCL15. Interacts with CCL23. Interacts with GNAI1. Interacts with PF4/CXCL4. As to expression, detected in the heart, spleen, lung, peritoneal exudate cells and leukocytes.

The protein localises to the cell membrane. Functionally, chemokine receptor that plays a crucial role in regulating immune cell migration, inflammation, and immune responses. Contributes to the inflammatory response by recruiting immune cells, such as monocytes, macrophages, T-cells, and dendritic cells, to sites of inflammation for the clearance of pathogens and the resolution of tissue damage. When activated by its ligands including CCL3, CCL5-9, CCL13-16 and CCL23, triggers a signaling cascade within immune cells, leading to their migration towards the source of the chemokine. For example, mediates neutrophil migration after activation by CCL3 leading to the sequential release of TNF-alpha and leukotriene B4. Also mediates monocyte migration upon CXCL4 binding. Activation by CCL5 results in neuroinflammation through the ERK1/2 signaling pathway. This is C-C chemokine receptor type 1 (Ccr1) from Mus musculus (Mouse).